The following is a 185-amino-acid chain: uncharacterized protein (185 aa).

A signal peptide spans 1-29 (MKNQEIIEVKSKMFLRIWAFVGSAGMGLA). Residue Cys-30 is the site of N-palmitoyl cysteine attachment. Cys-30 is lipidated: S-diacylglycerol cysteine. A helical transmembrane segment spans residues 45–67 (YLLAIPAGFLFTLFCLYLFIIFF).

This sequence to B.subtilis YfjE.

Its subcellular location is the cell membrane. This is an uncharacterized protein from Bacillus subtilis (strain 168).